Reading from the N-terminus, the 574-residue chain is Septation ring formation regulator EzrA (574 aa).

At 1 to 7 (MPTGTII) the chain is on the extracellular side. A helical membrane pass occupies residues 8 to 26 (LIVSIVIILIIAYVACLIV). Residues 27–574 (RKRNDNLLVA…YEKTREAIRY (548 aa)) lie on the Cytoplasmic side of the membrane. Residues 105–189 (SAKNAIDSID…IEVEFSEFVM (85 aa)) are a coiled coil.

Belongs to the EzrA family.

The protein resides in the cell membrane. Negative regulator of FtsZ ring formation; modulates the frequency and position of FtsZ ring formation. Inhibits FtsZ ring formation at polar sites. Interacts either with FtsZ or with one of its binding partners to promote depolymerization. This is Septation ring formation regulator EzrA from Streptococcus suis (strain 98HAH33).